A 198-amino-acid polypeptide reads, in one-letter code: Probable GTP-binding protein EngB (198 aa).

One can recognise an EngB-type G domain in the interval 22-195 (NRVEVAFVGR…IDNLFLEFAT (174 aa)). Residues 30–37 (GRSNVGKS), 57–61 (GKTRL), 75–78 (DLPG), 142–145 (TKSD), and 174–176 (FSS) contribute to the GTP site. Mg(2+) is bound by residues Ser37 and Thr59.

The protein belongs to the TRAFAC class TrmE-Era-EngA-EngB-Septin-like GTPase superfamily. EngB GTPase family. Mg(2+) is required as a cofactor.

Its function is as follows. Necessary for normal cell division and for the maintenance of normal septation. This is Probable GTP-binding protein EngB from Clostridium beijerinckii (strain ATCC 51743 / NCIMB 8052) (Clostridium acetobutylicum).